A 282-amino-acid polypeptide reads, in one-letter code: Bis(5'-nucleosyl)-tetraphosphatase, symmetrical (282 aa).

Belongs to the Ap4A hydrolase family. Monomer.

The enzyme catalyses P(1),P(4)-bis(5'-adenosyl) tetraphosphate + H2O = 2 ADP + 2 H(+). Its function is as follows. Hydrolyzes diadenosine 5',5'''-P1,P4-tetraphosphate to yield ADP. The protein is Bis(5'-nucleosyl)-tetraphosphatase, symmetrical of Escherichia coli O157:H7.